The following is a 180-amino-acid chain: ADP ribosylation factor 4 (180 aa).

A lipid anchor (N-myristoyl glycine) is attached at Gly-2. Residues 24–31, 67–71, and 126–129 each bind GTP; these read GLDAAGKT, DVGGQ, and NKQD.

It belongs to the small GTPase superfamily. Arf family. Uniformly distributed throughout adults.

The protein resides in the golgi apparatus. GTP-binding protein involved in protein trafficking; may modulate vesicle budding and uncoating within the Golgi apparatus. This is ADP ribosylation factor 4 from Drosophila melanogaster (Fruit fly).